We begin with the raw amino-acid sequence, 239 residues long: Probable septum site-determining protein MinC (239 aa).

The protein belongs to the MinC family. Interacts with MinD and FtsZ.

Functionally, cell division inhibitor that blocks the formation of polar Z ring septums. Rapidly oscillates between the poles of the cell to destabilize FtsZ filaments that have formed before they mature into polar Z rings. Prevents FtsZ polymerization. In Colwellia psychrerythraea (strain 34H / ATCC BAA-681) (Vibrio psychroerythus), this protein is Probable septum site-determining protein MinC.